Consider the following 191-residue polypeptide: MAESHGEAKGGEAKGTASAHTEAEGGHGFPPFQKETFPSQIASLVIAFVALYVIVSRVALPKVGAVIDARQKSIDGDLAEAQRLKDESEAAMKAYETELATARARAQAIGAETRDKLAASSEAERKALEDSLAAKLAAAETSIASTRATAMSNVRGIAADAASAIVQQLTGKAPAAKTVEAAVDASLKGTA.

Basic and acidic residues predominate over residues Met-1–Glu-12. Residues Met-1 to Pro-31 are disordered. A helical membrane pass occupies residues Pro-38–Leu-60.

It belongs to the ATPase B chain family. F-type ATPases have 2 components, F(1) - the catalytic core - and F(0) - the membrane proton channel. F(1) has five subunits: alpha(3), beta(3), gamma(1), delta(1), epsilon(1). F(0) has three main subunits: a(1), b(2) and c(10-14). The alpha and beta chains form an alternating ring which encloses part of the gamma chain. F(1) is attached to F(0) by a central stalk formed by the gamma and epsilon chains, while a peripheral stalk is formed by the delta and b chains.

The protein localises to the cell inner membrane. F(1)F(0) ATP synthase produces ATP from ADP in the presence of a proton or sodium gradient. F-type ATPases consist of two structural domains, F(1) containing the extramembraneous catalytic core and F(0) containing the membrane proton channel, linked together by a central stalk and a peripheral stalk. During catalysis, ATP synthesis in the catalytic domain of F(1) is coupled via a rotary mechanism of the central stalk subunits to proton translocation. Its function is as follows. Component of the F(0) channel, it forms part of the peripheral stalk, linking F(1) to F(0). The b'-subunit is a diverged and duplicated form of b found in plants and photosynthetic bacteria. In Bradyrhizobium sp. (strain ORS 278), this protein is ATP synthase subunit b 2 (atpF2).